The primary structure comprises 258 residues: Acyl-[acyl-carrier-protein]--UDP-N-acetylglucosamine O-acyltransferase (258 aa).

This sequence belongs to the transferase hexapeptide repeat family. LpxA subfamily. Homotrimer.

It localises to the cytoplasm. It carries out the reaction a (3R)-hydroxyacyl-[ACP] + UDP-N-acetyl-alpha-D-glucosamine = a UDP-3-O-[(3R)-3-hydroxyacyl]-N-acetyl-alpha-D-glucosamine + holo-[ACP]. Its pathway is glycolipid biosynthesis; lipid IV(A) biosynthesis; lipid IV(A) from (3R)-3-hydroxytetradecanoyl-[acyl-carrier-protein] and UDP-N-acetyl-alpha-D-glucosamine: step 1/6. Involved in the biosynthesis of lipid A, a phosphorylated glycolipid that anchors the lipopolysaccharide to the outer membrane of the cell. This chain is Acyl-[acyl-carrier-protein]--UDP-N-acetylglucosamine O-acyltransferase, found in Pseudomonas aeruginosa (strain LESB58).